Reading from the N-terminus, the 599-residue chain is Elongation factor 4 (599 aa).

A tr-type G domain is found at 3-185; that stretch reads KNIRNFSIIA…AIVERIPPPS (183 aa). GTP contacts are provided by residues 15–20 and 132–135; these read DHGKST and NKID.

This sequence belongs to the TRAFAC class translation factor GTPase superfamily. Classic translation factor GTPase family. LepA subfamily.

The protein localises to the cell membrane. It catalyses the reaction GTP + H2O = GDP + phosphate + H(+). Its function is as follows. Required for accurate and efficient protein synthesis under certain stress conditions. May act as a fidelity factor of the translation reaction, by catalyzing a one-codon backward translocation of tRNAs on improperly translocated ribosomes. Back-translocation proceeds from a post-translocation (POST) complex to a pre-translocation (PRE) complex, thus giving elongation factor G a second chance to translocate the tRNAs correctly. Binds to ribosomes in a GTP-dependent manner. The sequence is that of Elongation factor 4 from Syntrophomonas wolfei subsp. wolfei (strain DSM 2245B / Goettingen).